A 277-amino-acid chain; its full sequence is Digeranylgeranylglyceryl phosphate synthase (277 aa).

Helical transmembrane passes span 16–36 (ILAGIVGILGALVAYEGIPDI), 84–104 (ALYYALLQYAIGSILAYFLNI), 107–127 (FVFATIAYFLTFLYGWKLKPL), 146–166 (GAIGVGRIGLAGYLAICAFLV), 200–220 (AIIAAIFGFLTVIASFLPVKV), 221–241 (GIGLGYAPIIIVDIIIIKASI), and 257–277 (LKIATFVAVISFLAGALTKGV).

It belongs to the UbiA prenyltransferase family. DGGGP synthase subfamily. Mg(2+) is required as a cofactor.

It is found in the cell membrane. It catalyses the reaction sn-3-O-(geranylgeranyl)glycerol 1-phosphate + (2E,6E,10E)-geranylgeranyl diphosphate = 2,3-bis-O-(geranylgeranyl)-sn-glycerol 1-phosphate + diphosphate. It functions in the pathway membrane lipid metabolism; glycerophospholipid metabolism. Its function is as follows. Prenyltransferase that catalyzes the transfer of the geranylgeranyl moiety of geranylgeranyl diphosphate (GGPP) to the C2 hydroxyl of (S)-3-O-geranylgeranylglyceryl phosphate (GGGP). This reaction is the second ether-bond-formation step in the biosynthesis of archaeal membrane lipids. The protein is Digeranylgeranylglyceryl phosphate synthase of Pyrococcus furiosus (strain ATCC 43587 / DSM 3638 / JCM 8422 / Vc1).